Consider the following 527-residue polypeptide: Fusicoccadiene C-8 hydroxylase (527 aa).

A helical transmembrane segment spans residues 15–35 (GKPLLLFLILITLTYSLGIVF). N125 is a glycosylation site (N-linked (GlcNAc...) asparagine). Heme is bound at residue C465. N-linked (GlcNAc...) asparagine glycosylation is present at N496.

Belongs to the cytochrome P450 family. It depends on heme as a cofactor.

The protein localises to the membrane. It functions in the pathway mycotoxin biosynthesis. In terms of biological role, cytochrome P450 monooxygenase; part of the gene cluster that mediates the biosynthesis of the diterpene glucoside brassicicene C. In the first step of the brassicicene C biosynthesis, the bifunctional diterpene synthase bsc8 that possesses both prenyl transferase and terpene cyclase activity, converts isopentenyl diphosphate and dimethylallyl diphosphate into geranylgeranyl diphosphate (GGDP) that is further converted into fusicocca-2,10(14)-diene, the first precursor for brassicicene C. Fusicocca-2,10(14)-diene is then substrate of cytochrome P450 monooxygenase bsc1 for hydroxylation at the C-8 position. Oxidation at C-16 position to aldehyde is then catalyzed by the cytochrome P450 monooyxygenase bsc7, yielding fusicocca-2,10(14)-diene-8-beta,16-diol. Follows the isomerization of the double bond and reduction of aldehyde to alcohol catalyzed by the short-chain dehydrogenase/reductase bsc3 to yield the diol compound fusicocca-1,10(14)-diene-8 beta,16-diol. The next step is the oxidation at the C-3 position of fusicocca-2,10(14)-diene-8-beta,16-diol catalyzed by the alpha-ketoglutarate dependent dioxygenase bsc9, to produce a triol compound. Methylation of the hydroxy group at position 16 is performed by the methyltransferase bsc6. 16-O-methylation is followed by oxidation at the C-13 position to ketone and an alkyl shift of the methyl group leads to brassicicene C. Although the probable acetyltransferase bsc4 is included in the gene cluster, no acetylation reactions are necessary for brassicicene C biosynthesis. However, the fact that brassicicene E, which is a structurally related compound having an acetoxy group at position 12, was previously isolated from another strain of A.brassicicola suggests that the ATCC 96836 strain might also produce a small amount of brassicicene E. The protein is Fusicoccadiene C-8 hydroxylase of Alternaria brassicicola (Dark leaf spot agent).